The primary structure comprises 416 residues: MDLLIENARLVTMQEGEQGYLPSPLARVGIRSGKIVALSTVTKGEDSAETESTLNPDHYEQTIDLQSKLLLPGLIDCHTHLVYAGNRANEFEMRLNGVPYEEIAKQGGGILSTVRATREASEEQLIELALPRLDGLLASGITSAEVKSGYGLTLQDEIKMLRAAKALEQERKVKITTTLLAAHALPPEFKGRADDYIQHICDDIIPLVAEEKLATSVDVFCESIGFNLAQTERVFEAAKKHGLHVKGHTEQLSDLGGTTLTAEYSGLSADHIEYLDEVGVRSLANSSTVATLLPGAFYFLRETQLPPIELLRAHKVPMAIATDINPGTSPFADLTLMLNMACTLFRLTPQEALRGVTQNAAKALGYGESRGVIEIGYDADFSIWDIEHPADLSYQVGAKRLVGRIVNGEYVSHGGL.

Residues His-78 and His-80 each contribute to the Fe(3+) site. Zn(2+)-binding residues include His-78 and His-80. Residues Arg-87, Tyr-150, and His-183 each coordinate 4-imidazolone-5-propanoate. N-formimidoyl-L-glutamate is bound at residue Tyr-150. His-248 is a Fe(3+) binding site. His-248 provides a ligand contact to Zn(2+). Gln-251 serves as a coordination point for 4-imidazolone-5-propanoate. Residue Asp-323 participates in Fe(3+) binding. Asp-323 is a Zn(2+) binding site. N-formimidoyl-L-glutamate-binding residues include Asn-325 and Gly-327. Residue Thr-328 coordinates 4-imidazolone-5-propanoate.

Belongs to the metallo-dependent hydrolases superfamily. HutI family. Zn(2+) is required as a cofactor. It depends on Fe(3+) as a cofactor.

The protein resides in the cytoplasm. It carries out the reaction 4-imidazolone-5-propanoate + H2O = N-formimidoyl-L-glutamate. It participates in amino-acid degradation; L-histidine degradation into L-glutamate; N-formimidoyl-L-glutamate from L-histidine: step 3/3. Functionally, catalyzes the hydrolytic cleavage of the carbon-nitrogen bond in imidazolone-5-propanoate to yield N-formimidoyl-L-glutamate. It is the third step in the universal histidine degradation pathway. This is Imidazolonepropionase from Vibrio campbellii (strain ATCC BAA-1116).